Here is a 429-residue protein sequence, read N- to C-terminus: Glutamyl-tRNA reductase (429 aa).

Substrate contacts are provided by residues 50–53 (TCNR), serine 108, 113–115 (EPQ), and glutamine 119. Cysteine 51 acts as the Nucleophile in catalysis. 188–193 (GAGEMI) provides a ligand contact to NADP(+).

The protein belongs to the glutamyl-tRNA reductase family. In terms of assembly, homodimer.

The catalysed reaction is (S)-4-amino-5-oxopentanoate + tRNA(Glu) + NADP(+) = L-glutamyl-tRNA(Glu) + NADPH + H(+). Its pathway is porphyrin-containing compound metabolism; protoporphyrin-IX biosynthesis; 5-aminolevulinate from L-glutamyl-tRNA(Glu): step 1/2. In terms of biological role, catalyzes the NADPH-dependent reduction of glutamyl-tRNA(Glu) to glutamate 1-semialdehyde (GSA). The polypeptide is Glutamyl-tRNA reductase (Polaromonas naphthalenivorans (strain CJ2)).